The primary structure comprises 508 residues: D-alanine--D-alanyl carrier protein ligase (508 aa).

152 to 153 (TS) lines the ATP pocket. Asp-198 is a binding site for D-alanine. 293–298 (NTYGPT) provides a ligand contact to ATP. Val-302 is a binding site for D-alanine. ATP is bound by residues Asp-384, 396 to 399 (YRGR), and Lys-495. D-alanine is bound at residue Lys-495.

Belongs to the ATP-dependent AMP-binding enzyme family. DltA subfamily.

The protein resides in the cytoplasm. It carries out the reaction holo-[D-alanyl-carrier protein] + D-alanine + ATP = D-alanyl-[D-alanyl-carrier protein] + AMP + diphosphate. It participates in cell wall biogenesis; lipoteichoic acid biosynthesis. In terms of biological role, catalyzes the first step in the D-alanylation of lipoteichoic acid (LTA), the activation of D-alanine and its transfer onto the D-alanyl carrier protein (Dcp) DltC. In an ATP-dependent two-step reaction, forms a high energy D-alanyl-AMP intermediate, followed by transfer of the D-alanyl residue as a thiol ester to the phosphopantheinyl prosthetic group of the Dcp. D-alanylation of LTA plays an important role in modulating the properties of the cell wall in Gram-positive bacteria, influencing the net charge of the cell wall. This Lactiplantibacillus plantarum (strain ATCC BAA-793 / NCIMB 8826 / WCFS1) (Lactobacillus plantarum) protein is D-alanine--D-alanyl carrier protein ligase.